A 121-amino-acid chain; its full sequence is Large ribosomal subunit protein bL17 (121 aa).

It belongs to the bacterial ribosomal protein bL17 family. In terms of assembly, part of the 50S ribosomal subunit. Contacts protein L32.

This Rubrobacter xylanophilus (strain DSM 9941 / JCM 11954 / NBRC 16129 / PRD-1) protein is Large ribosomal subunit protein bL17.